The sequence spans 89 residues: Large ribosomal subunit protein bL27 (89 aa).

Positions 1 to 21 (MAHKKGASSSRNGRDSNAQRL) are disordered. The segment covering 7–19 (ASSSRNGRDSNAQ) has biased composition (polar residues).

Belongs to the bacterial ribosomal protein bL27 family.

This is Large ribosomal subunit protein bL27 from Frankia alni (strain DSM 45986 / CECT 9034 / ACN14a).